Reading from the N-terminus, the 331-residue chain is Zinc finger protein 660 (331 aa).

Over residues 1 to 12 the composition is skewed to basic residues; sequence MRRKTRNFKHKT. The disordered stretch occupies residues 1-35; it reads MRRKTRNFKHKTVKDNKVLTEGSDQESEKDNSQCC. S23 carries the phosphoserine modification. 10 C2H2-type zinc fingers span residues 50 to 72, 78 to 100, 106 to 128, 134 to 156, 162 to 184, 190 to 212, 218 to 240, 246 to 268, 274 to 296, and 302 to 324; these read YVCT…ERIH, YKCK…RRIH, YTCS…QGIH, YECK…HRVH, YSCI…QRMH, YKCK…QRIH, YECD…QRLH, YKCN…QRVH, YKCN…LRTH, and YKCS…QRKH.

This sequence belongs to the krueppel C2H2-type zinc-finger protein family.

Its subcellular location is the nucleus. Its function is as follows. May be involved in transcriptional regulation. This chain is Zinc finger protein 660 (ZNF660), found in Homo sapiens (Human).